The following is a 183-amino-acid chain: Peptide deformylase-like (183 aa).

Residue Glu-140 is part of the active site.

The protein belongs to the polypeptide deformylase family.

This chain is Peptide deformylase-like, found in Rickettsia conorii (strain ATCC VR-613 / Malish 7).